The following is a 67-amino-acid chain: Kappa-scoloptoxin(04)-Ssd1b (67 aa).

A signal peptide spans 1 to 24; sequence MKKTCVVSVFLVLLLLKFHDLSMG. The propeptide occupies 25–36; the sequence is EEISPLKKVARR. 2 disulfide bridges follow: C44-C55 and C49-C62.

As to expression, expressed by the venom gland.

The protein resides in the secreted. In Scolopendra dehaani (Thai centipede), this protein is Kappa-scoloptoxin(04)-Ssd1b.